Consider the following 81-residue polypeptide: Photosystem I iron-sulfur center (81 aa).

2 4Fe-4S ferredoxin-type domains span residues 2–31 and 39–68; these read SHSV…MIPW and IASA…VRVY. [4Fe-4S] cluster-binding residues include Cys11, Cys14, Cys17, Cys21, Cys48, Cys51, Cys54, and Cys58.

The eukaryotic PSI reaction center is composed of at least 11 subunits. Requires [4Fe-4S] cluster as cofactor.

Its subcellular location is the plastid thylakoid membrane. The enzyme catalyses reduced [plastocyanin] + hnu + oxidized [2Fe-2S]-[ferredoxin] = oxidized [plastocyanin] + reduced [2Fe-2S]-[ferredoxin]. Apoprotein for the two 4Fe-4S centers FA and FB of photosystem I (PSI); essential for photochemical activity. FB is the terminal electron acceptor of PSI, donating electrons to ferredoxin. The C-terminus interacts with PsaA/B/D and helps assemble the protein into the PSI complex. Required for binding of PsaD and PsaE to PSI. PSI is a plastocyanin-ferredoxin oxidoreductase, converting photonic excitation into a charge separation, which transfers an electron from the donor P700 chlorophyll pair to the spectroscopically characterized acceptors A0, A1, FX, FA and FB in turn. This is Photosystem I iron-sulfur center from Cuscuta reflexa (Southern Asian dodder).